Consider the following 266-residue polypeptide: Tryptophan synthase alpha chain (266 aa).

Catalysis depends on proton acceptor residues Glu-45 and Asp-56.

It belongs to the TrpA family. As to quaternary structure, tetramer of two alpha and two beta chains.

It catalyses the reaction (1S,2R)-1-C-(indol-3-yl)glycerol 3-phosphate + L-serine = D-glyceraldehyde 3-phosphate + L-tryptophan + H2O. It participates in amino-acid biosynthesis; L-tryptophan biosynthesis; L-tryptophan from chorismate: step 5/5. Functionally, the alpha subunit is responsible for the aldol cleavage of indoleglycerol phosphate to indole and glyceraldehyde 3-phosphate. In Novosphingobium aromaticivorans (strain ATCC 700278 / DSM 12444 / CCUG 56034 / CIP 105152 / NBRC 16084 / F199), this protein is Tryptophan synthase alpha chain.